We begin with the raw amino-acid sequence, 358 residues long: Protein Wnt-8 (358 aa).

An N-terminal signal peptide occupies residues 1–22 (MQNTTLFILATLLIFCPFFTAS). Cysteines 55 and 66 form a disulfide. N-linked (GlcNAc...) asparagine glycosylation occurs at asparagine 104. Disulfide bonds link cysteine 105–cysteine 113, cysteine 115–cysteine 133, cysteine 181–cysteine 195, cysteine 183–cysteine 190, cysteine 260–cysteine 298, cysteine 276–cysteine 291, cysteine 295–cysteine 337, cysteine 313–cysteine 328, cysteine 315–cysteine 325, and cysteine 320–cysteine 321. Serine 187 carries the O-palmitoleoyl serine lipid modification. Residues asparagine 263 and asparagine 282 are each glycosylated (N-linked (GlcNAc...) asparagine).

This sequence belongs to the Wnt family. Homooligomer; disulfide-linked, leading to inactivation. Interacts with the long chain of cer1. Palmitoleoylation is required for efficient binding to frizzled receptors. Depalmitoleoylation leads to Wnt signaling pathway inhibition. Post-translationally, proteolytic processing by tiki1 and tiki2 promotes oxidation and formation of large disulfide-bond oligomers, leading to inactivation of wnt8.

It is found in the secreted. The protein localises to the extracellular space. It localises to the extracellular matrix. Functionally, ligand for members of the frizzled family of seven transmembrane receptors. Plays a role in ventral mesodermal patterning during embryogenesis. Mimics Nieuwkoop center activity. Causes dorsal mesodermal differentiation of animal cap ectoderm when coexpressed with noggin and nuclear, sequence-specific DNA-binding protein xBra. None of these molecules causes dorsal mesoderm formation when expressed alone. This Xenopus laevis (African clawed frog) protein is Protein Wnt-8 (wnt8).